The chain runs to 493 residues: Cytochrome P450 2E1 (493 aa).

298–303 serves as a coordination point for substrate; that stretch reads FAGTET. Heme is bound at residue Cys-437.

Belongs to the cytochrome P450 family. As to quaternary structure, interacts with chaperones HSP70 and HSP90; this interaction is required for initial targeting to mitochondria. Heme is required as a cofactor.

Its subcellular location is the endoplasmic reticulum membrane. It is found in the microsome membrane. The protein resides in the mitochondrion inner membrane. It carries out the reaction an organic molecule + reduced [NADPH--hemoprotein reductase] + O2 = an alcohol + oxidized [NADPH--hemoprotein reductase] + H2O + H(+). The enzyme catalyses (5Z,8Z,11Z)-eicosatrienoate + reduced [NADPH--hemoprotein reductase] + O2 = 19-hydroxy-(5Z,8Z,11Z)-eicosatrienoate + oxidized [NADPH--hemoprotein reductase] + H2O + H(+). It catalyses the reaction (5Z,8Z,11Z,14Z,17Z)-eicosapentaenoate + reduced [NADPH--hemoprotein reductase] + O2 = 19-hydroxy-(5Z,8Z,11Z,14Z,17Z)-eicosapentaenoate + oxidized [NADPH--hemoprotein reductase] + H2O + H(+). The catalysed reaction is (4Z,7Z,10Z,13Z,16Z,19Z)-docosahexaenoate + reduced [NADPH--hemoprotein reductase] + O2 = 21-hydroxy-(4Z,7Z,10Z,13Z,16Z,19Z)-docosahexaenoate + oxidized [NADPH--hemoprotein reductase] + H2O + H(+). It carries out the reaction dodecanoate + reduced [NADPH--hemoprotein reductase] + O2 = 11-hydroxydodecanoate + oxidized [NADPH--hemoprotein reductase] + H2O + H(+). The enzyme catalyses tetradecanoate + reduced [NADPH--hemoprotein reductase] + O2 = 13-hydroxytetradecanoate + oxidized [NADPH--hemoprotein reductase] + H2O + H(+). It catalyses the reaction 4-nitrophenol + NADPH + O2 + H(+) = 4-nitrocatechol + NADP(+) + H2O. Its pathway is lipid metabolism; fatty acid metabolism. The omega-1 hydroxylase activity is stimulated by cytochrome b5. Its function is as follows. A cytochrome P450 monooxygenase involved in the metabolism of fatty acids. Mechanistically, uses molecular oxygen inserting one oxygen atom into a substrate, and reducing the second into a water molecule, with two electrons provided by NADPH via cytochrome P450 reductase (NADPH--hemoprotein reductase). Catalyzes the hydroxylation of carbon-hydrogen bonds. Hydroxylates fatty acids specifically at the omega-1 position displaying the highest catalytic activity for saturated fatty acids. May be involved in the oxidative metabolism of xenobiotics. This is Cytochrome P450 2E1 from Homo sapiens (Human).